The chain runs to 151 residues: Small ribosomal subunit protein uS9 (151 aa).

The protein belongs to the universal ribosomal protein uS9 family.

This chain is Small ribosomal subunit protein uS9 (rps9), found in Aeropyrum pernix (strain ATCC 700893 / DSM 11879 / JCM 9820 / NBRC 100138 / K1).